We begin with the raw amino-acid sequence, 901 residues long: Protein translocase subunit SecA (901 aa).

Residues glutamine 87, 105–109 (GEGKT), and aspartate 512 each bind ATP. A disordered region spans residues 859–901 (HQDDDSAAAAALAAQTGERKVGRNDPCPCGSGKKYKQCHGRLQ). 4 residues coordinate Zn(2+): cysteine 885, cysteine 887, cysteine 896, and histidine 897. The span at 891–901 (KKYKQCHGRLQ) shows a compositional bias: basic residues.

The protein belongs to the SecA family. As to quaternary structure, monomer and homodimer. Part of the essential Sec protein translocation apparatus which comprises SecA, SecYEG and auxiliary proteins SecDF-YajC and YidC. Zn(2+) serves as cofactor.

It localises to the cell inner membrane. The protein localises to the cytoplasm. The enzyme catalyses ATP + H2O + cellular proteinSide 1 = ADP + phosphate + cellular proteinSide 2.. Its function is as follows. Part of the Sec protein translocase complex. Interacts with the SecYEG preprotein conducting channel. Has a central role in coupling the hydrolysis of ATP to the transfer of proteins into and across the cell membrane, serving both as a receptor for the preprotein-SecB complex and as an ATP-driven molecular motor driving the stepwise translocation of polypeptide chains across the membrane. The sequence is that of Protein translocase subunit SecA from Escherichia coli O6:K15:H31 (strain 536 / UPEC).